The following is a 239-amino-acid chain: Fatty acid metabolism regulator protein (239 aa).

Residues 6-74 (KGPASFAEKY…HGKPTQVNNF (69 aa)) form the HTH gntR-type domain. The H-T-H motif DNA-binding region spans 34–53 (ERELSELIGVTRTTLREVLQ).

As to quaternary structure, homodimer.

It is found in the cytoplasm. Functionally, multifunctional regulator of fatty acid metabolism. The protein is Fatty acid metabolism regulator protein of Shewanella frigidimarina (strain NCIMB 400).